The following is a 1382-amino-acid chain: DNA-directed RNA polymerase subunit beta' (1382 aa).

Zn(2+) is bound by residues Cys70, Cys72, Cys85, and Cys88. Residues Asp460, Asp462, and Asp464 each coordinate Mg(2+). The Zn(2+) site is built by Cys808, Cys882, Cys889, and Cys892.

It belongs to the RNA polymerase beta' chain family. In terms of assembly, the RNAP catalytic core consists of 2 alpha, 1 beta, 1 beta' and 1 omega subunit. When a sigma factor is associated with the core the holoenzyme is formed, which can initiate transcription. It depends on Mg(2+) as a cofactor. Requires Zn(2+) as cofactor.

The catalysed reaction is RNA(n) + a ribonucleoside 5'-triphosphate = RNA(n+1) + diphosphate. DNA-dependent RNA polymerase catalyzes the transcription of DNA into RNA using the four ribonucleoside triphosphates as substrates. This is DNA-directed RNA polymerase subunit beta' from Citrifermentans bemidjiense (strain ATCC BAA-1014 / DSM 16622 / JCM 12645 / Bem) (Geobacter bemidjiensis).